The chain runs to 146 residues: Bacterial hemoglobin (146 aa).

In terms of domain architecture, Globin spans 1–138 (MLDQQTINII…IADVFIQVEA (138 aa)). Heme b is bound by residues Gln53 and His85.

Belongs to the globin family. In terms of assembly, homodimer.

Its function is as follows. This protein functions as a terminal oxidase. The sequence is that of Bacterial hemoglobin (vhb) from Vitreoscilla stercoraria.